An 834-amino-acid polypeptide reads, in one-letter code: Ras GTPase-activating protein 3 (834 aa).

C2 domains lie at 1–112 and 123–263; these read MAVE…DTWF and VQGK…EAWY. Ala-2 is modified (N-acetylalanine). Position 66 is a phosphotyrosine (Tyr-66). The residue at position 77 (Ser-77) is a Phosphoserine. Thr-110 bears the Phosphothreonine mark. A Ras-GAP domain is found at 346–561; that stretch reads GRVVPFISAI…DAVKNFLDLI (216 aa). The PH domain occupies 576–677; it reads ILLKEGFMIK…WIDILTKVSQ (102 aa). The Btk-type zinc-finger motif lies at 679-715; sequence NQKRLTVFHPSAYLNGHWLCCRASSDTAAGCTPCTGG. Residues His-687, Cys-698, Cys-699, and Cys-709 each coordinate Zn(2+). Phosphoserine is present on residues Ser-809 and Ser-833.

As to expression, high levels in brain, lower in spleen and lung.

In terms of biological role, inhibitory regulator of the Ras-cyclic AMP pathway. May bind inositol tetrakisphosphate (IP4). In Mus musculus (Mouse), this protein is Ras GTPase-activating protein 3 (Rasa3).